A 205-amino-acid chain; its full sequence is Holliday junction resolvase RecU (205 aa).

Mg(2+) is bound by residues threonine 83, aspartate 85, glutamate 98, and glutamine 117.

It belongs to the RecU family. Mg(2+) serves as cofactor.

It is found in the cytoplasm. It catalyses the reaction Endonucleolytic cleavage at a junction such as a reciprocal single-stranded crossover between two homologous DNA duplexes (Holliday junction).. Functionally, endonuclease that resolves Holliday junction intermediates in genetic recombination. Cleaves mobile four-strand junctions by introducing symmetrical nicks in paired strands. Promotes annealing of linear ssDNA with homologous dsDNA. Required for DNA repair, homologous recombination and chromosome segregation. This Streptococcus suis (strain 98HAH33) protein is Holliday junction resolvase RecU.